Here is a 308-residue protein sequence, read N- to C-terminus: uncharacterized protein (308 aa).

Residues 212 to 242 (EADKMTIDYMRELDNLQRQYDGLVDEDKALH) adopt a coiled-coil conformation.

This is an uncharacterized protein from Ostreid herpesvirus 1 (isolate France) (OsHV-1).